The primary structure comprises 123 residues: UPF0102 protein APJL_1381 (123 aa).

It belongs to the UPF0102 family.

The protein is UPF0102 protein APJL_1381 of Actinobacillus pleuropneumoniae serotype 3 (strain JL03).